Reading from the N-terminus, the 911-residue chain is Ribonuclease J (911 aa).

Residues 1 to 70 (MMKPASLQGF…VTSAPASGTS (70 aa)) constitute a chloroplast transit peptide. The tract at residues 58–90 (SCSVTSAPASGTSSSSKTPRRRSGRLEGVGKSM) is disordered. The span at 63-74 (SAPASGTSSSSK) shows a compositional bias: low complexity. Residues histidine 175, histidine 177, aspartate 179, histidine 180, histidine 245, and aspartate 267 each coordinate Zn(2+). Substrate is bound by residues 336–338 (ASN) and 468–472 (HTSGH). Histidine 494 lines the Zn(2+) pocket. 2 disordered regions span residues 695–723 (VEGNDKRSRAKKAPSQEASPKEVDRTLED) and 735–824 (EETA…WKPE). Basic and acidic residues-rich tracts occupy residues 713–722 (SPKEVDRTLE) and 783–795 (ADTEPKAEGKENS). Over residues 796–806 (RDDDELADASD) the composition is skewed to acidic residues. One can recognise a Myb-like domain in the interval 813–877 (PKRVRKNKWK…QCKSLWASLI (65 aa)).

Belongs to the metallo-beta-lactamase superfamily. RNA-metabolizing metallo-beta-lactamase-like family. Bacterial RNase J subfamily. Homodimer. May be a subunit of the RNA degradosome. Requires Zn(2+) as cofactor. In terms of tissue distribution, moslty expressed in inflorescences, seedlings, leaves, flowers and flower buds, and, to a lower extent, in stems, siliques and roots.

It is found in the plastid. The protein resides in the chloroplast. Essential protein required during embryogenesis, especially in initiating and maintaining the organization of shoot apical meristems (SAMs), cotyledons, and hypocotyls. Involved in auxin-mediated pathways during embryogenesis. RNase that has both endonuclease and 5'-3' exonuclease activities. Involved in RNA surveillance to prevent overaccumulation of antisense RNA. Probably involved in maturation of rRNA and in some organisms also mRNA maturation and/or decay. In Arabidopsis thaliana (Mouse-ear cress), this protein is Ribonuclease J.